A 354-amino-acid chain; its full sequence is Uptake hydrogenase small subunit (354 aa).

A signal peptide (tat-type signal) is located at residues 1–44; sequence MSQLETXYDVMRRQGITRRSFLKYCSLTGRPCLGPTFAPQIAHA. Residues Cys-61, Cys-64, Cys-156, Cys-190, His-228, Ser-231, Cys-256, and Cys-262 each coordinate [4Fe-4S] cluster. Residues Cys-271, Cys-290, and Cys-293 each coordinate [3Fe-4S] cluster.

This sequence belongs to the [NiFe]/[NiFeSe] hydrogenase small subunit family. In terms of assembly, heterodimer of a large and a small subunit. [4Fe-4S] cluster is required as a cofactor. Requires [3Fe-4S] cluster as cofactor. Predicted to be exported by the Tat system. The position of the signal peptide cleavage has not been experimentally proven.

Its subcellular location is the cell membrane. It carries out the reaction H2 + A = AH2. Its function is as follows. This enzyme recycles the H(2) produced by nitrogenase to increase the production of ATP and to protect nitrogenase against inhibition or damage by O(2) under carbon- or phosphate-limited conditions. The chain is Uptake hydrogenase small subunit (hupA) from Azotobacter chroococcum mcd 1.